We begin with the raw amino-acid sequence, 220 residues long: Adenylate kinase (220 aa).

12–17 (GAGKGT) lines the ATP pocket. The tract at residues 32–62 (STGDIFRDIVKKENDELGKKIKEIMERGELV) is NMP. Residues T33, R38, 60 to 62 (ELV), 88 to 91 (GYPR), and Q95 each bind AMP. Positions 129 to 166 (ARRICPKCGRIYNLISLPPKEDELCDDCKVKLVQREDD) are LID. R130 lines the ATP pocket. C133 and C136 together coordinate Zn(2+). Position 139–140 (139–140 (IY)) interacts with ATP. Residues C153 and C156 each contribute to the Zn(2+) site. Positions 163 and 174 each coordinate AMP. Residue I202 participates in ATP binding.

The protein belongs to the adenylate kinase family. In terms of assembly, monomer.

It localises to the cytoplasm. The catalysed reaction is AMP + ATP = 2 ADP. The protein operates within purine metabolism; AMP biosynthesis via salvage pathway; AMP from ADP: step 1/1. Its function is as follows. Catalyzes the reversible transfer of the terminal phosphate group between ATP and AMP. Plays an important role in cellular energy homeostasis and in adenine nucleotide metabolism. This is Adenylate kinase from Thermotoga petrophila (strain ATCC BAA-488 / DSM 13995 / JCM 10881 / RKU-1).